We begin with the raw amino-acid sequence, 156 residues long: tRNA (cytidine(34)-2'-O)-methyltransferase (156 aa).

The S-adenosyl-L-methionine site is built by glycine 100, isoleucine 122, and serine 130.

This sequence belongs to the class IV-like SAM-binding methyltransferase superfamily. RNA methyltransferase TrmH family. TrmL subfamily. In terms of assembly, homodimer.

Its subcellular location is the cytoplasm. The enzyme catalyses cytidine(34) in tRNA + S-adenosyl-L-methionine = 2'-O-methylcytidine(34) in tRNA + S-adenosyl-L-homocysteine + H(+). It carries out the reaction 5-carboxymethylaminomethyluridine(34) in tRNA(Leu) + S-adenosyl-L-methionine = 5-carboxymethylaminomethyl-2'-O-methyluridine(34) in tRNA(Leu) + S-adenosyl-L-homocysteine + H(+). In terms of biological role, methylates the ribose at the nucleotide 34 wobble position in the two leucyl isoacceptors tRNA(Leu)(CmAA) and tRNA(Leu)(cmnm5UmAA). Catalyzes the methyl transfer from S-adenosyl-L-methionine to the 2'-OH of the wobble nucleotide. This Aeromonas hydrophila subsp. hydrophila (strain ATCC 7966 / DSM 30187 / BCRC 13018 / CCUG 14551 / JCM 1027 / KCTC 2358 / NCIMB 9240 / NCTC 8049) protein is tRNA (cytidine(34)-2'-O)-methyltransferase.